Here is a 460-residue protein sequence, read N- to C-terminus: tRNA modification GTPase MnmE (460 aa).

The (6S)-5-formyl-5,6,7,8-tetrahydrofolate site is built by R25, E87, and R126. The region spanning 221–381 (GLKVAIVGRP…LETAIANLVQ (161 aa)) is the TrmE-type G domain. N231 contacts K(+). Residues 231–236 (NVGKSS), 250–256 (TDLPGTT), and 275–278 (DTAG) contribute to the GTP site. Mg(2+) is bound at residue S235. K(+) is bound by residues T250, L252, and T255. A Mg(2+)-binding site is contributed by T256. K460 contacts (6S)-5-formyl-5,6,7,8-tetrahydrofolate.

This sequence belongs to the TRAFAC class TrmE-Era-EngA-EngB-Septin-like GTPase superfamily. TrmE GTPase family. Homodimer. Heterotetramer of two MnmE and two MnmG subunits. K(+) is required as a cofactor.

The protein localises to the cytoplasm. Its function is as follows. Exhibits a very high intrinsic GTPase hydrolysis rate. Involved in the addition of a carboxymethylaminomethyl (cmnm) group at the wobble position (U34) of certain tRNAs, forming tRNA-cmnm(5)s(2)U34. This chain is tRNA modification GTPase MnmE, found in Picosynechococcus sp. (strain ATCC 27264 / PCC 7002 / PR-6) (Agmenellum quadruplicatum).